Here is a 276-residue protein sequence, read N- to C-terminus: Proteasome subunit beta type-8 (276 aa).

Residues 1-72 constitute a propeptide, removed in mature form; that stretch reads MALLDLCGAP…RKVQIEMAHG (72 aa). Threonine 73 (nucleophile) is an active-site residue.

The protein belongs to the peptidase T1B family. As to quaternary structure, the 26S proteasome consists of a 20S proteasome core and two 19S regulatory subunits. The 20S proteasome core is composed of 28 subunits that are arranged in four stacked rings, resulting in a barrel-shaped structure. The two end rings are each formed by seven alpha subunits, and the two central rings are each formed by seven beta subunits. The catalytic chamber with the active sites is on the inside of the barrel. Component of the immunoproteasome, where it displaces the equivalent housekeeping subunit PSMB5. Component of the spermatoproteasome, a form of the proteasome specifically found in testis. Directly interacts with POMP. Interacts with TAP1. Post-translationally, autocleaved. The resulting N-terminal Thr residue of the mature subunit is responsible for the nucleophile proteolytic activity.

The protein resides in the cytoplasm. It localises to the nucleus. The enzyme catalyses Cleavage of peptide bonds with very broad specificity.. Its function is as follows. The proteasome is a multicatalytic proteinase complex which is characterized by its ability to cleave peptides with Arg, Phe, Tyr, Leu, and Glu adjacent to the leaving group at neutral or slightly basic pH. The proteasome has an ATP-dependent proteolytic activity. This subunit is involved in antigen processing to generate class I binding peptides. May participate in the generation of spliced peptides resulting from the ligation of two separate proteasomal cleavage products that are not contiguous in the parental protein. Required for adipocyte differentiation. In Rattus norvegicus (Rat), this protein is Proteasome subunit beta type-8 (Psmb8).